Reading from the N-terminus, the 657-residue chain is tRNA 5-methylaminomethyl-2-thiouridine biosynthesis bifunctional protein MnmC (657 aa).

Positions 1-238 (MPASTLLQHA…KWEVMSGEYT (238 aa)) are tRNA (mnm(5)s(2)U34)-methyltransferase. Residues 265 to 657 (IGAGLAGSAS…FGLRRLIRGK (393 aa)) are FAD-dependent cmnm(5)s(2)U34 oxidoreductase.

This sequence in the N-terminal section; belongs to the methyltransferase superfamily. tRNA (mnm(5)s(2)U34)-methyltransferase family. It in the C-terminal section; belongs to the DAO family. FAD serves as cofactor.

Its subcellular location is the cytoplasm. It carries out the reaction 5-aminomethyl-2-thiouridine(34) in tRNA + S-adenosyl-L-methionine = 5-methylaminomethyl-2-thiouridine(34) in tRNA + S-adenosyl-L-homocysteine + H(+). Its function is as follows. Catalyzes the last two steps in the biosynthesis of 5-methylaminomethyl-2-thiouridine (mnm(5)s(2)U) at the wobble position (U34) in tRNA. Catalyzes the FAD-dependent demodification of cmnm(5)s(2)U34 to nm(5)s(2)U34, followed by the transfer of a methyl group from S-adenosyl-L-methionine to nm(5)s(2)U34, to form mnm(5)s(2)U34. This is tRNA 5-methylaminomethyl-2-thiouridine biosynthesis bifunctional protein MnmC from Pseudomonas putida (strain W619).